A 257-amino-acid chain; its full sequence is Zinc transporter ZupT (257 aa).

Transmembrane regions (helical) follow at residues 5–25 (LILTILAGAATFIGAFLGVLG), 32–52 (LLAFSLGFAAGIMLLISLMEM), 61–81 (GMSPVLGYGMFIFGLLGYLGL), 109–129 (AILLTLGISLHNFPEGIATFV), 137–157 (LGFGIALAVALHNIPEGLAVV), 171–191 (ILWAGISGLAEILGGVLAWLI), 195–215 (MISPVVMAAIMAAVAGIMVAL), and 236–256 (GVLCGMSVMGFSLVLLQTAGI). Residues Asn120 and Glu123 each contribute to the Fe(2+) site. Glu123 and His148 together coordinate Zn(2+). Positions 149, 152, and 181 each coordinate Fe(2+). A Zn(2+)-binding site is contributed by Glu152.

This sequence belongs to the ZIP transporter (TC 2.A.5) family. ZupT subfamily.

The protein localises to the cell inner membrane. It catalyses the reaction Zn(2+)(in) = Zn(2+)(out). Functionally, mediates zinc uptake. May also transport other divalent cations. In Shigella dysenteriae serotype 1 (strain Sd197), this protein is Zinc transporter ZupT.